The sequence spans 374 residues: Alcohol dehydrogenase class-3 (374 aa).

N-acetylalanine is present on alanine 2. Zn(2+) contacts are provided by cysteine 45, histidine 67, cysteine 97, cysteine 100, cysteine 103, cysteine 111, and cysteine 174. Lysine 233 carries the N6-succinyllysine modification. Serine 247 carries the post-translational modification Phosphoserine. Lysine 315 carries the post-translational modification N6-succinyllysine. Serine 324 is subject to Phosphoserine.

The protein belongs to the zinc-containing alcohol dehydrogenase family. Class-III subfamily. As to quaternary structure, homodimer. It depends on Zn(2+) as a cofactor.

The protein resides in the cytoplasm. It carries out the reaction a primary alcohol + NAD(+) = an aldehyde + NADH + H(+). It catalyses the reaction a secondary alcohol + NAD(+) = a ketone + NADH + H(+). The catalysed reaction is S-(hydroxymethyl)glutathione + NADP(+) = S-formylglutathione + NADPH + H(+). The enzyme catalyses S-(hydroxymethyl)glutathione + NAD(+) = S-formylglutathione + NADH + H(+). It carries out the reaction 20-oxo-(5Z,8Z,11Z,14Z)-eicosatetraenoate + NAD(+) + H2O = (5Z,8Z,11Z,14Z)-eicosatetraenedioate + NADH + 2 H(+). It catalyses the reaction 20-hydroxy-(5Z,8Z,11Z,14Z)-eicosatetraenoate + NAD(+) = 20-oxo-(5Z,8Z,11Z,14Z)-eicosatetraenoate + NADH + H(+). The catalysed reaction is S-nitrosoglutathione + NADH + H(+) = S-(hydroxysulfenamide)glutathione + NAD(+). Its function is as follows. Catalyzes the oxidation of long-chain primary alcohols and the oxidation of S-(hydroxymethyl) glutathione. Also oxidizes long chain omega-hydroxy fatty acids, such as 20-HETE, producing both the intermediate aldehyde, 20-oxoarachidonate and the end product, a dicarboxylic acid, (5Z,8Z,11Z,14Z)-eicosatetraenedioate. Class-III ADH is remarkably ineffective in oxidizing ethanol. Required for clearance of cellular formaldehyde, a cytotoxic and carcinogenic metabolite that induces DNA damage. Also acts as a S-nitroso-glutathione reductase by catalyzing the NADH-dependent reduction of S-nitrosoglutathione, thereby regulating protein S-nitrosylation. The sequence is that of Alcohol dehydrogenase class-3 from Bos taurus (Bovine).